Reading from the N-terminus, the 297-residue chain is Ectoine dioxygenase (297 aa).

Gln-131 is an L-ectoine binding site. Residue Lys-137 participates in 2-oxoglutarate binding. Fe cation-binding residues include His-148, Asp-150, and His-249.

It belongs to the PhyH family. EctD subfamily. In terms of assembly, homodimer. Fe(2+) is required as a cofactor.

The enzyme catalyses L-ectoine + 2-oxoglutarate + O2 = 5-hydroxyectoine + succinate + CO2. Involved in the biosynthesis of 5-hydroxyectoine, called compatible solute, which helps organisms to survive extreme osmotic stress by acting as a highly soluble organic osmolyte. Catalyzes the 2-oxoglutarate-dependent selective hydroxylation of L-ectoine to yield (4S,5S)-5-hydroxyectoine. This is Ectoine dioxygenase from Streptomyces anulatus (Streptomyces chrysomallus).